The chain runs to 43 residues: Photosystem II reaction center protein Y (43 aa).

Residues 8 to 26 (LFLVVAPILAAVSWAAFNI) traverse the membrane as a helical segment.

This sequence belongs to the PsbY family. PSII is composed of 1 copy each of membrane proteins PsbA, PsbB, PsbC, PsbD, PsbE, PsbF, PsbH, PsbI, PsbJ, PsbK, PsbL, PsbM, PsbT, PsbX, PsbY, PsbZ, Psb30/Ycf12, peripheral proteins PsbO, CyanoQ (PsbQ), PsbU, PsbV and a large number of cofactors. It forms dimeric complexes.

The protein localises to the cellular thylakoid membrane. Its function is as follows. Loosely associated component of the core of photosystem II (PSII), it is not always seen in crystals. PSII is a light-driven water plastoquinone oxidoreductase, using light energy to abstract electrons from H(2)O, generating a proton gradient subsequently used for ATP formation. In Parasynechococcus marenigrum (strain WH8102), this protein is Photosystem II reaction center protein Y.